The chain runs to 282 residues: Shikimate dehydrogenase (NADP(+)) (282 aa).

Shikimate contacts are provided by residues 19 to 21 and threonine 66; that span reads SFS. The active-site Proton acceptor is lysine 70. Shikimate contacts are provided by asparagine 91 and aspartate 106. NADP(+) is bound by residues 130-134, 152-157, threonine 196, methionine 200, and leucine 224; these read GAGGA and NRTVEK. Residue tyrosine 226 coordinates shikimate. Glycine 247 is an NADP(+) binding site.

This sequence belongs to the shikimate dehydrogenase family. As to quaternary structure, homodimer.

The catalysed reaction is shikimate + NADP(+) = 3-dehydroshikimate + NADPH + H(+). The protein operates within metabolic intermediate biosynthesis; chorismate biosynthesis; chorismate from D-erythrose 4-phosphate and phosphoenolpyruvate: step 4/7. Functionally, involved in the biosynthesis of the chorismate, which leads to the biosynthesis of aromatic amino acids. Catalyzes the reversible NADPH linked reduction of 3-dehydroshikimate (DHSA) to yield shikimate (SA). This Methanocaldococcus jannaschii (strain ATCC 43067 / DSM 2661 / JAL-1 / JCM 10045 / NBRC 100440) (Methanococcus jannaschii) protein is Shikimate dehydrogenase (NADP(+)).